Reading from the N-terminus, the 340-residue chain is GTPase Obg (340 aa).

The Obg domain occupies 1–158 (MSFIDEAKVY…KYITLKLKII (158 aa)). The OBG-type G domain maps to 159 to 325 (SDIGIIGLPN…LSTLIQYIHK (167 aa)). GTP is bound by residues 165-172 (GLPNAGKS), 190-194 (FTTLE), 211-214 (DIPG), 278-281 (NKSD), and 306-308 (SSI). S172 and T192 together coordinate Mg(2+).

Belongs to the TRAFAC class OBG-HflX-like GTPase superfamily. OBG GTPase family. In terms of assembly, monomer. The cofactor is Mg(2+).

It localises to the cytoplasm. In terms of biological role, an essential GTPase which binds GTP, GDP and possibly (p)ppGpp with moderate affinity, with high nucleotide exchange rates and a fairly low GTP hydrolysis rate. Plays a role in control of the cell cycle, stress response, ribosome biogenesis and in those bacteria that undergo differentiation, in morphogenesis control. The chain is GTPase Obg from Ehrlichia chaffeensis (strain ATCC CRL-10679 / Arkansas).